Here is a 1597-residue protein sequence, read N- to C-terminus: MRDAIAEPVPPPALADTPAAAMEELRPAPPPQPEPDPECCPAARQECMLGESARKSMESDPEDFSDETNTETLYGTSPPSTPRQMKRLSAKHQRNSAGRPASRSNLKEKMNTPSQSPHKDLGKGVETVEEYSYKQEKKIRATLRTTERDHKKNAQCSFMLDSVAGSLPKKSIPDVDLNKPYLSLGCSNAKLPVSMPMPIARTARQTSRTDCPADRLKFFETLRLLLKLTSVSKKKDREQRGQENTAAFWFNRSNELIWLELQAWHAGRTINDQDLFLYTARQAIPDIINEILTFKVNYGSIAFSSNGAGFNGPLVEGQCRTPQETNRVGCSSYHEHLQRQRVSFEQVKRIMELLEYMEALYPSLQALQKDYERYAAKDFEDRVQALCLWLNITKDLNQKLRIMGTVLGIKNLSDIGWPVFEIPSPRPSKGYEPEDEVEDTEVELRELESGTEESDEEPTPSPRVPELRLSTDAILDSRSQGCVSRKLERLESEEDSIGWGTADCGPEASRHCLTSIYRPFVDKALKQMGLRKLILRLHKLMNGSLQRARVALVKDDRPVEFSDFPGPMWGSDYVQLSGTPPSSEQKCSAVSWEELRAMDLPSFEPAFLVLCRVLLNVIHECLKLRLEQRPAGEPSLLSIKQLVRECKEVLKGGLLMKQYYQFMLQEVLGGLEKTDCNMDAFEEDLQKMLMVYFDYMRSWIQMLQQLPQASHSLKNLLEEEWNFTKEITHYIRGGEAQAGKLFCDIAGMLLKSTGSFLESGLQESCAELWTSADDNGAADELRRSVIEISRALKELFHEARERASKALGFAKMLRKDLEIAAEFVLSASARELLDALKAKQYVKVQIPGLENLHVFVPDSLAEEKKIILQLLNAATGKDCSKDPDDVFMDAFLLLTKHGDRARDSEDGWGTWEARAVKIVPQVETVDTLRSMQVDNLLLVVMESAHLVLQRKAFQQSIEGLMTVRHEQTSSQPIIAKGLQQLKNDALELCNRISDAIDRVDHMFTLEFDAEVEESESATLQQYYREAMIQGYNFGFEYHKEVVRLMSGEFRQKIGDKYISFAQKWMNYVLTKCESGRGTRPRWATQGFDFLQAIEPAFISALPEDDFLSLQALMNECIGHVIGKPHSPVTAIHRNSPRPVKVPRCHSDPPNPHLIIPTPEGFSTRSVPSDARTHGNSVAAAAAVAAAATTAAGRPGPGGGDSVPAKPVNTAPDTRGSSVPENDRLASIAAELQFRSLSRHSSPTEERDEPAYPRSDSSGSTRRSWELRTLISQTKDSASKQGPIEAIQKSVRLFEERRYREMRRKNIIGQVCDTPKSYDNVMHVGLRKVTFKWQRGNKIGEGQYGKVYTCISVDTGELMAMKEIRFQPNDHKTIKETADELKIFEGIKHPNLVRYFGVELHREEMYIFMEYCDEGTLEEVSRLGLQEHVIRLYTKQITVAINVLHEHGIVHRDIKGANIFLTSSGLIKLGDFGCSVKLKNNAQTMPGEVNSTLGTAAYMAPEVITRAKGEGHGRAADIWSLGCVVIEMVTGKRPWHEYEHNFQIMYKVGMGHKPPIPERLSPEGKAFLSHCLESDPKIRWTASQLLDHAFVKVCTDEE.

Disordered regions lie at residues 1–128 (MRDA…VETV) and 424–465 (SPRP…PRVP). The span at 59-69 (SDPEDFSDETN) shows a compositional bias: acidic residues. Residue Ser77 is modified to Phosphoserine. Residues 84-94 (QMKRLSAKHQR) are compositionally biased toward basic residues. Ser424 is subject to Phosphoserine. At Thr440 the chain carries Phosphothreonine. Ser449 carries the post-translational modification Phosphoserine. Residues 449-458 (SGTEESDEEP) show a composition bias toward acidic residues. Thr451 bears the Phosphothreonine mark. A phosphoserine mark is found at Ser454 and Ser492. Disordered stretches follow at residues 1137–1157 (RPVKVPRCHSDPPNPHLIIPT), 1190–1220 (AAGRPGPGGGDSVPAKPVNTAPDTRGSSVPE), and 1233–1263 (FRSLSRHSSPTEERDEPAYPRSDSSGSTRRS). A compositionally biased stretch (polar residues) spans 1210–1219 (APDTRGSSVP). Ser1241 and Ser1263 each carry phosphoserine. Residues 1241 to 1250 (SPTEERDEPA) show a composition bias toward basic and acidic residues. The region spanning 1332 to 1590 (WQRGNKIGEG…ASQLLDHAFV (259 aa)) is the Protein kinase domain. Residues 1338–1346 (IGEGQYGKV) and Lys1361 each bind ATP. Asp1452 functions as the Proton acceptor in the catalytic mechanism.

Belongs to the protein kinase superfamily. STE Ser/Thr protein kinase family. MAP kinase kinase kinase subfamily. In terms of assembly, monomer and homodimer. Homodimerization enhances kinase activity. Interacts with CDC42. Interacts with TRAF4; this promotes homodimerization. Binds both upstream activators and downstream substrates in multimolecular complexes. Interacts with AXIN1 and DIXDC1; interaction with DIXDC1 prevents interaction with AXIN1. Interacts with GADD45 and MAP2K6. Interacts with ZFP36; this interaction enhances the association with SH3KBP1/CIN85. Interacts with SH3KBP1; this interaction enhances the association with ZFP36. Mg(2+) serves as cofactor. As to expression, widely expressed. High expression was found in skeletal muscle, kidney, testis followed by heart brain and lung. Low expression was found in spleen.

It is found in the cytoplasm. The protein localises to the perinuclear region. It catalyses the reaction L-seryl-[protein] + ATP = O-phospho-L-seryl-[protein] + ADP + H(+). The catalysed reaction is L-threonyl-[protein] + ATP = O-phospho-L-threonyl-[protein] + ADP + H(+). N-terminal autoinhibitory domain interacts with the C-terminal kinase domain, inhibiting kinase activity, and preventing interaction with its substrate, MAP2K6. The GADD45 proteins activate the kinase by binding to the N-terminal domain. Activated by phosphorylation on Thr-1494. Its function is as follows. Component of a protein kinase signal transduction cascade. Activates the CSBP2, P38 and JNK MAPK pathways, but not the ERK pathway. Specifically phosphorylates and activates MAP2K4 and MAP2K6. The chain is Mitogen-activated protein kinase kinase kinase 4 (Map3k4) from Mus musculus (Mouse).